A 541-amino-acid chain; its full sequence is MHTLIKSVLEEILEAEVIIEHPKDREHGHYATPIAFNLAKIFKKSPLVIAEELALKISTHAKTQGFFDSVVACKGYINFTLSLDFLERFTQKALELKEKFGSKFKSENSQKIFLEFVSANPTGPLHIGHARGAVFGDSLAKIARFLGHEVLCEYYVNDMGSQIRLLGLSVWLAYREHVLKEGVTYPEVFYKGEYIIEIAKKAHNDLEPSLFKENEETIIEVLSSYAKDLMLLEIKDNLDSLGIHFDSYASEKEIFKHKDAVFKNLEKANALYEKDSKIWLKSSLYQDESDRVLVKEDKNYTYLAGDIVYHNEKFKQNYTKYINIWGADHHGYIARVKASLKFLGYDSNKLEVLLAQMVGLLKDNEPYKMSKRAGNFILIKDVVDDIGKDALRFIFLSKRLDTHLEFDVNTLKKQDSSNPIYYIHYANSRIHTMLEKSPFSKEEILQTPLKNLNAEEKYLLFSALSLPKIIEASFEEYGLQKMCEYAKTLASEFHRFYNAGKILDTPKTKELLKICLMVSLSLTNAFKLLGIEIKTKISAKD.

Residues 119–129 (ANPTGPLHIGH) carry the 'HIGH' region motif.

The protein belongs to the class-I aminoacyl-tRNA synthetase family. As to quaternary structure, monomer.

It localises to the cytoplasm. The enzyme catalyses tRNA(Arg) + L-arginine + ATP = L-arginyl-tRNA(Arg) + AMP + diphosphate. This Helicobacter acinonychis (strain Sheeba) protein is Arginine--tRNA ligase.